The following is a 150-amino-acid chain: Large ribosomal subunit protein uL15 (150 aa).

The interval 1–55 (MADNEILQMHDLKPAPGAKKDRTRVGRGEGSKGKTSGRGAKGQTKRNHVRPGFEG) is disordered. Residues 8–32 (QMHDLKPAPGAKKDRTRVGRGEGSK) show a composition bias toward basic and acidic residues.

The protein belongs to the universal ribosomal protein uL15 family. As to quaternary structure, part of the 50S ribosomal subunit.

Its function is as follows. Binds to the 23S rRNA. This is Large ribosomal subunit protein uL15 from Bifidobacterium longum (strain NCC 2705).